We begin with the raw amino-acid sequence, 312 residues long: Short-chain dehydrogenase/reductase pkfC (312 aa).

The NADP(+) site is built by Lys-56, Asn-108, and Lys-140. Ser-164 serves as the catalytic Proton donor. NADP(+)-binding residues include Tyr-193 and Lys-197. Tyr-193 acts as the Proton acceptor in catalysis. Lys-197 serves as the catalytic Lowers pKa of active site Tyr.

It belongs to the short-chain dehydrogenases/reductases (SDR) family.

It functions in the pathway secondary metabolite biosynthesis. Its function is as follows. Short-chain dehydrogenase/reductase; part of the gene cluster that mediates the biosynthesis of aspernidine A, a prenylated isoindolinone. The starting point of the biosynthesis of aspernidin A is the production of orsellinaldehyde by the non-reducing polyketide synthase pkfA. Hydroxylation, methylation of one of the phenol groups, and prenylation, presumably catalyzed by the prenyltransferase pkfE, would be needed to yield aspernidine D. Subsequently, the cytochrome P450 monooxygenase pkfB is responsible for hydroxylation of aspernidine D to yield aspernidine E. The dehydrogenase pkfF may be responsible for further oxidation of aspernidine E to form a dialdehyde intermediate which is further transformed in a series of steps, some of which are enzyme-mediated, to generate aspernidine A. The possibility that additional enzymes outside of the cluster are involved in aspernidine A biosynthesis cannot be excluded. This is Short-chain dehydrogenase/reductase pkfC from Emericella nidulans (strain FGSC A4 / ATCC 38163 / CBS 112.46 / NRRL 194 / M139) (Aspergillus nidulans).